A 137-amino-acid chain; its full sequence is Large ribosomal subunit protein uL16c (137 aa).

Residues 1-17 (MLSPKKTRFRRQHRGRM) show a composition bias toward basic residues. Positions 1–21 (MLSPKKTRFRRQHRGRMKGLS) are disordered.

It belongs to the universal ribosomal protein uL16 family. In terms of assembly, part of the 50S ribosomal subunit.

The protein localises to the plastid. This is Large ribosomal subunit protein uL16c from Cuscuta obtusiflora (Peruvian dodder).